A 50-amino-acid chain; its full sequence is uncharacterized protein (50 aa).

A helical membrane pass occupies residues 5 to 19; sequence IIIIVIVIIIFFFYL. A coiled-coil region spans residues 19–50; sequence LKQKKLTNCETQVVKVQKDIDEINLKLKKLNK.

It localises to the membrane. This is an uncharacterized protein from Acheta domesticus (House cricket).